The following is a 652-amino-acid chain: MINAQELLTLEDVTVEFTWEEWQLLGPFQKDLYRDVMLEIYSNLLSMGYQVSKPDALSKLERGEEPWTMEDERHSRICPENNEVDDHLQDHLENQRMLKSVEQYHEHNAFGNTASQTKSLCLFRENHDTFELYIKTLKSNLSLVNQNKSCEINNSTKFSGDGKSFLHGNYEELYSAAKFSVSTKANSTKSQVSKHQRTHEIEKNHVCSECGKAFVKKSQLTDHERVHTGEKPYGCTLCAKVFSRKSRLNEHQRIHKREKSFICSECGKVFTMKSRLIEHQRTHTGEKPYICNECGKGFPGKRNLIVHQRNHTGEKSYICSECGKGFTGKSMLIIHQRTHTGEKPYICSECGKGFTTKHYVIIHQRNHTGEKPYICNECGKGFTMKSRMIEHQRTHTGEKPYICSECGKGFPRKSNLIVHQRNHTVEKSYLCSECGKGFTVKSMLIIHQRTHTGEKPYTCSECGKGFPLKSRLIVHQRTHTGEKPYRCSECGKGFIVNSGLMLHQRTHTGEKPYICNECGKGFAFKSNLVVHQRTHTGEKPFMCSECGKGFTMKRYLIVHQQIHTEEKSCICSECGRGFAKETELALHKQVHTGEKPYGCNECGKGFTMKSRLIVHQRTHTGEKPFVCSECRKAFSSKRNLIVHQRTHNGNKP.

Residues 8–79 (LTLEDVTVEF…EDERHSRICP (72 aa)) form the KRAB domain. Residue Tyr-41 is modified to 3'-nitrotyrosine. ADP-ribosylserine is present on residues Ser-139 and Ser-164. C2H2-type zinc fingers lie at residues 205–227 (HVCS…ERVH), 233–255 (YGCT…QRIH), 261–283 (FICS…QRTH), 289–311 (YICN…QRNH), 317–339 (YICS…QRTH), 345–367 (YICS…QRNH), 373–395 (YICN…QRTH), 401–423 (YICS…QRNH), 429–451 (YLCS…QRTH), 457–479 (YTCS…QRTH), 485–507 (YRCS…QRTH), 513–535 (YICN…QRTH), 541–563 (FMCS…QQIH), 567–591 (KSCI…KQVH), 597–619 (YGCN…QRTH), and 625–647 (FVCS…QRTH). Position 246 is an ADP-ribosylserine (Ser-246). At Ser-330 the chain carries ADP-ribosylserine. Position 414 is an ADP-ribosylserine (Ser-414).

It belongs to the krueppel C2H2-type zinc-finger protein family. Interacts with PARP1 and several chromatin remodeling proteins; the interaction with PARP1 reshapes ZNF432 interacting proteins. Interacts with TRIM28; the interaction is independent of PARP1.

It localises to the nucleus. Functionally, homologous recombination repressor that functions as a poly(ADP-ribose) (PAR) reader regulating DNA damage response and PARP inhibition. Once recruited to DNA lesions via DNA-, in a PAR-dependent mechanism, stimulates PARP1 activity. Binds preferentially ssDNA and inhibits EXO1-mediated resection, probably through a PAR-independent DNA-binding mechanism. The polypeptide is Zinc finger protein 432 (Homo sapiens (Human)).